A 454-amino-acid polypeptide reads, in one-letter code: tRNA modification GTPase MnmE (454 aa).

(6S)-5-formyl-5,6,7,8-tetrahydrofolate-binding residues include Arg23, Glu80, and Lys120. Residues 216 to 377 (GMKVVIAGRP…LRNNLKQSMG (162 aa)) form the TrmE-type G domain. Position 226 (Asn226) interacts with K(+). GTP-binding positions include 226 to 231 (NAGKSS), 245 to 251 (TDIAGTT), 270 to 273 (DTAG), 335 to 338 (NKAD), and 358 to 360 (SAR). Mg(2+) is bound at residue Ser230. The K(+) site is built by Thr245, Ile247, and Thr250. Residue Thr251 participates in Mg(2+) binding. Lys454 is a binding site for (6S)-5-formyl-5,6,7,8-tetrahydrofolate.

Belongs to the TRAFAC class TrmE-Era-EngA-EngB-Septin-like GTPase superfamily. TrmE GTPase family. Homodimer. Heterotetramer of two MnmE and two MnmG subunits. It depends on K(+) as a cofactor.

The protein localises to the cytoplasm. Functionally, exhibits a very high intrinsic GTPase hydrolysis rate. Involved in the addition of a carboxymethylaminomethyl (cmnm) group at the wobble position (U34) of certain tRNAs, forming tRNA-cmnm(5)s(2)U34. In Salmonella paratyphi A (strain AKU_12601), this protein is tRNA modification GTPase MnmE.